The following is a 160-amino-acid chain: Transcription elongation factor GreA (160 aa).

The stretch at I14–E38 forms a coiled coil.

It belongs to the GreA/GreB family.

In terms of biological role, necessary for efficient RNA polymerase transcription elongation past template-encoded arresting sites. The arresting sites in DNA have the property of trapping a certain fraction of elongating RNA polymerases that pass through, resulting in locked ternary complexes. Cleavage of the nascent transcript by cleavage factors such as GreA or GreB allows the resumption of elongation from the new 3'terminus. GreA releases sequences of 2 to 3 nucleotides. This chain is Transcription elongation factor GreA, found in Maridesulfovibrio salexigens (strain ATCC 14822 / DSM 2638 / NCIMB 8403 / VKM B-1763) (Desulfovibrio salexigens).